The sequence spans 148 residues: 3-hydroxyacyl-[acyl-carrier-protein] dehydratase FabZ (148 aa).

The active site involves His-48.

The protein belongs to the thioester dehydratase family. FabZ subfamily.

The protein resides in the cytoplasm. It carries out the reaction a (3R)-hydroxyacyl-[ACP] = a (2E)-enoyl-[ACP] + H2O. Functionally, involved in unsaturated fatty acids biosynthesis. Catalyzes the dehydration of short chain beta-hydroxyacyl-ACPs and long chain saturated and unsaturated beta-hydroxyacyl-ACPs. In Campylobacter concisus (strain 13826), this protein is 3-hydroxyacyl-[acyl-carrier-protein] dehydratase FabZ.